Here is a 404-residue protein sequence, read N- to C-terminus: Proteasomal ubiquitin receptor ADRM1-A (404 aa).

A Pru domain is found at serine 17–proline 130. Residues glycine 195–serine 247 are compositionally biased toward low complexity. Disordered regions lie at residues glycine 195–threonine 258 and phenylalanine 376–aspartate 404. Residues asparagine 248 to threonine 258 are compositionally biased toward polar residues. The 113-residue stretch at threonine 278–glutamate 390 folds into the DEUBAD domain. Basic and acidic residues predominate over residues glutamine 386–lysine 395.

It belongs to the ADRM1 family. As to quaternary structure, component of the 19S proteasome regulatory particle complex. The 26S proteasome consists of a 20S core particle (CP) and two 19S regulatory subunits (RP).

The protein resides in the cytoplasm. The protein localises to the nucleus. Its function is as follows. Component of the 26S proteasome, a multiprotein complex involved in the ATP-dependent degradation of ubiquitinated proteins. This complex plays a key role in the maintenance of protein homeostasis by removing misfolded or damaged proteins, which could impair cellular functions, and by removing proteins whose functions are no longer required. Therefore, the proteasome participates in numerous cellular processes, including cell cycle progression, apoptosis, or DNA damage repair. Within the complex, functions as a proteasomal ubiquitin receptor. The chain is Proteasomal ubiquitin receptor ADRM1-A (adrm1-a) from Xenopus laevis (African clawed frog).